Reading from the N-terminus, the 637-residue chain is Glutamate--cysteine ligase catalytic subunit (637 aa).

N-acetylmethionine is present on M1. Phosphoserine is present on residues S5 and S8.

Belongs to the glutamate--cysteine ligase type 3 family. In terms of assembly, heterodimer of a catalytic heavy chain and a regulatory light chain. In terms of tissue distribution, most abundant in kidney. Also found in liver and testis.

The catalysed reaction is L-cysteine + L-glutamate + ATP = gamma-L-glutamyl-L-cysteine + ADP + phosphate + H(+). The enzyme catalyses (2S)-2-aminobutanoate + L-glutamate + ATP = gamma-L-glutamyl-(2S)-2-aminobutanoate + ADP + phosphate + H(+). It functions in the pathway sulfur metabolism; glutathione biosynthesis; glutathione from L-cysteine and L-glutamate: step 1/2. Its activity is regulated as follows. Feedback inhibition by glutathione. Functionally, catalyzes the ATP-dependent ligation of L-glutamate and L-cysteine and participates in the first and rate-limiting step in glutathione biosynthesis. This chain is Glutamate--cysteine ligase catalytic subunit, found in Rattus norvegicus (Rat).